The sequence spans 195 residues: MTIICIDGIIGAGKSTVTHRLKKNLYKCYEEPIDKWTLLPNLYNDMKKYATPFQFQVLFSQYDQYLSFKDCKETVVVERCPWTSKNIFTSLMIENNLFDLSAIDTYNNLYERLSYQVDHFIYIKVDSEMAFERIKKRDRFAEQNISFDYLKSLENKYATSLATLSPSTVTIIDGSNTIEEVEFDVKTAINNFLSH.

ATP is bound at residue 8 to 16 (GIIGAGKST). The substrate site is built by Glu31, Tyr43, and Gln54. Glu78 serves as the catalytic Proton acceptor. Substrate is bound by residues Arg79 and Glu142.

The protein belongs to the DCK/DGK family.

This Acheta domesticus (House cricket) protein is Putative kinase protein 143R.